The sequence spans 285 residues: UPF0703 protein YcgQ (285 aa).

4 consecutive transmembrane segments (helical) span residues 4–24, 34–54, 89–109, and 210–230; these read LLVL…GNLT, LSFI…YLFI, LIYV…IATL, and FVLR…GMLV.

The protein belongs to the UPF0703 family.

The protein resides in the cell membrane. The chain is UPF0703 protein YcgQ (ycgQ) from Bacillus subtilis (strain 168).